The primary structure comprises 435 residues: MQISVESLSSVKKKINFEIPAARVASEVEKVYDEIRKHAAIKGFRKGKVPKDIIKKHYHEKMADDVLKNIVNDTYFKALTDEKIYPVSYPVIDSDELKVGENFKYSATVEVFPDVEVKDYDGLEVKKEKFVLNDEVVTGRLREMQENMAHLEPAEAGVAAKSGDYVTFDFKGSIDGVPFDGGAADDFQLELGSGRFIPGFEDQLVGMKSGDESEIKVTFPENYGQKDLAGKDASFTVKIKEIKVKELPELNDDFAKDFGEFETLEDLKKKIAEVHNLQENERIEADLRDRLIKALIEKNSFEVPETLVDKQLNLMLENSKRRLAMQRLTIEMMGLNDEGYKAQFRSAAETQVKGSILLDALARKESIEVTAAEVDEKLEQIAQQNNQDLEQVNKFYQQNAQAKENLSAQLKEDKAIELLLSKATVTEVERKELDK.

Residues glycine 163–proline 248 enclose the PPIase FKBP-type domain.

The protein belongs to the FKBP-type PPIase family. Tig subfamily.

The protein localises to the cytoplasm. It carries out the reaction [protein]-peptidylproline (omega=180) = [protein]-peptidylproline (omega=0). Functionally, involved in protein export. Acts as a chaperone by maintaining the newly synthesized protein in an open conformation. Functions as a peptidyl-prolyl cis-trans isomerase. The sequence is that of Trigger factor from Geotalea daltonii (strain DSM 22248 / JCM 15807 / FRC-32) (Geobacter daltonii).